Reading from the N-terminus, the 164-residue chain is Transcription elongation factor GreA (164 aa).

It belongs to the GreA/GreB family.

In terms of biological role, necessary for efficient RNA polymerase transcription elongation past template-encoded arresting sites. The arresting sites in DNA have the property of trapping a certain fraction of elongating RNA polymerases that pass through, resulting in locked ternary complexes. Cleavage of the nascent transcript by cleavage factors such as GreA or GreB allows the resumption of elongation from the new 3'terminus. GreA releases sequences of 2 to 3 nucleotides. The polypeptide is Transcription elongation factor GreA (Helicobacter pylori (strain P12)).